The primary structure comprises 635 residues: Putative adagio-like protein 2 (635 aa).

Residues 1-25 are compositionally biased toward acidic residues; the sequence is MEWDSDSEGSGDEEEEEEEEEEEGV. The tract at residues 1–32 is disordered; that stretch reads MEWDSDSEGSGDEEEEEEEEEEEGVEVGGGGD. One can recognise a PAS domain in the interval 44–123; it reads ALAIEGVLGA…TDIRRCLEEG (80 aa). C91 carries the S-4a-FMN cysteine modification. Residues 209 to 255 enclose the F-box domain; that stretch reads SDLFLLSDEVLCQKILSRLSPRDIASVNSVCKRLYHLTRNDDLWRMV. 4 Kelch repeats span residues 371–421, 423–474, 476–530, and 542–594; these read RLVL…TLDG, KLVV…VYDG, KILM…PPPR, and RILI…VVGG.

Belongs to the ADAGIO family. FMN binds covalently to cysteine after exposure to blue light and is reversed in the dark.

The protein localises to the nucleus. It functions in the pathway protein modification; protein ubiquitination. In terms of biological role, component of an E3 ubiquitin ligase complex that plays a central role in blue light-dependent circadian cycles. Acts as a blue light photoreceptor, due to the presence of FMN, that mediates light-regulated protein degradation of critical clock components by targeting them to the proteasome complex. This chain is Putative adagio-like protein 2, found in Oryza sativa subsp. japonica (Rice).